The chain runs to 255 residues: tRNA pseudouridine synthase B (255 aa).

Catalysis depends on Asp-52, which acts as the Nucleophile. The substrate site is built by Tyr-80, Tyr-183, and Leu-204.

Belongs to the pseudouridine synthase TruB family. Type 1 subfamily.

It carries out the reaction uridine(55) in tRNA = pseudouridine(55) in tRNA. In terms of biological role, responsible for synthesis of pseudouridine from uracil-55 in the psi GC loop of transfer RNAs. This Blochmanniella floridana protein is tRNA pseudouridine synthase B.